Here is a 547-residue protein sequence, read N- to C-terminus: uncharacterized protein (547 aa).

To B.subtilis RocB.

This is an uncharacterized protein from Bacillus subtilis (strain 168).